The following is a 261-amino-acid chain: Probable enoyl-CoA hydratase EchA17 (261 aa).

It belongs to the enoyl-CoA hydratase/isomerase family.

It carries out the reaction a (3S)-3-hydroxyacyl-CoA = a (2E)-enoyl-CoA + H2O. The catalysed reaction is a 4-saturated-(3S)-3-hydroxyacyl-CoA = a (3E)-enoyl-CoA + H2O. Could possibly oxidize fatty acids using specific components. The sequence is that of Probable enoyl-CoA hydratase EchA17 (echA17) from Mycobacterium bovis (strain BCG / Pasteur 1173P2).